The primary structure comprises 247 residues: Adenosylcobinamide-GDP ribazoletransferase (247 aa).

Transmembrane regions (helical) follow at residues 34–54 (IVMF…IFIL), 59–79 (CGIP…TGGF), 113–133 (GGLA…ELAL), 138–158 (MLAA…LLMY), 171–191 (VFIG…AVIV), and 194–214 (VLLP…AIFI).

The protein belongs to the CobS family. The cofactor is Mg(2+).

It is found in the cell inner membrane. It carries out the reaction alpha-ribazole + adenosylcob(III)inamide-GDP = adenosylcob(III)alamin + GMP + H(+). The catalysed reaction is alpha-ribazole 5'-phosphate + adenosylcob(III)inamide-GDP = adenosylcob(III)alamin 5'-phosphate + GMP + H(+). It participates in cofactor biosynthesis; adenosylcobalamin biosynthesis; adenosylcobalamin from cob(II)yrinate a,c-diamide: step 7/7. Joins adenosylcobinamide-GDP and alpha-ribazole to generate adenosylcobalamin (Ado-cobalamin). Also synthesizes adenosylcobalamin 5'-phosphate from adenosylcobinamide-GDP and alpha-ribazole 5'-phosphate. In Salmonella paratyphi A (strain ATCC 9150 / SARB42), this protein is Adenosylcobinamide-GDP ribazoletransferase.